The primary structure comprises 283 residues: 2-dehydro-3-deoxyphosphooctonate aldolase (283 aa).

Belongs to the KdsA family.

The protein localises to the cytoplasm. The catalysed reaction is D-arabinose 5-phosphate + phosphoenolpyruvate + H2O = 3-deoxy-alpha-D-manno-2-octulosonate-8-phosphate + phosphate. The protein operates within carbohydrate biosynthesis; 3-deoxy-D-manno-octulosonate biosynthesis; 3-deoxy-D-manno-octulosonate from D-ribulose 5-phosphate: step 2/3. Its pathway is bacterial outer membrane biogenesis; lipopolysaccharide biosynthesis. The sequence is that of 2-dehydro-3-deoxyphosphooctonate aldolase from Parasynechococcus marenigrum (strain WH8102).